The primary structure comprises 230 residues: Large ribosomal subunit protein uL1 (230 aa).

It belongs to the universal ribosomal protein uL1 family. In terms of assembly, part of the 50S ribosomal subunit.

Binds directly to 23S rRNA. The L1 stalk is quite mobile in the ribosome, and is involved in E site tRNA release. Functionally, protein L1 is also a translational repressor protein, it controls the translation of the L11 operon by binding to its mRNA. In Acidithiobacillus ferrooxidans (strain ATCC 53993 / BNL-5-31) (Leptospirillum ferrooxidans (ATCC 53993)), this protein is Large ribosomal subunit protein uL1.